We begin with the raw amino-acid sequence, 677 residues long: Histidine ammonia-lyase (677 aa).

A cross-link (5-imidazolinone (Cys-Gly)) is located at residues 269-271; that stretch reads CSG. Ser-270 is subject to 2,3-didehydroalanine (Ser).

This sequence belongs to the PAL/histidase family. Contains an active site 4-methylidene-imidazol-5-one (MIO), which is formed autocatalytically by cyclization and dehydration of residues Cys-Ser-Gly.

The catalysed reaction is L-histidine = trans-urocanate + NH4(+). It functions in the pathway amino-acid degradation; L-histidine degradation into L-glutamate; N-formimidoyl-L-glutamate from L-histidine: step 1/3. This Caenorhabditis elegans protein is Histidine ammonia-lyase.